Consider the following 22-residue polypeptide: Putative lactoylglutathione lyase (22 aa).

A disordered region spans residues 1–22; it reads ITACLDPDGWKEPGPLPGISTK. E12 serves as the catalytic Proton donor/acceptor.

Belongs to the glyoxalase I family. Zn(2+) is required as a cofactor.

It carries out the reaction (R)-S-lactoylglutathione = methylglyoxal + glutathione. It functions in the pathway secondary metabolite metabolism; methylglyoxal degradation; (R)-lactate from methylglyoxal: step 1/2. In terms of biological role, catalyzes the conversion of hemimercaptal, formed from methylglyoxal and glutathione, to S-lactoylglutathione. This is Putative lactoylglutathione lyase from Pinus strobus (Eastern white pine).